A 241-amino-acid polypeptide reads, in one-letter code: 3-deoxy-manno-octulosonate cytidylyltransferase (241 aa).

Belongs to the KdsB family.

It localises to the cytoplasm. It catalyses the reaction 3-deoxy-alpha-D-manno-oct-2-ulosonate + CTP = CMP-3-deoxy-beta-D-manno-octulosonate + diphosphate. The protein operates within nucleotide-sugar biosynthesis; CMP-3-deoxy-D-manno-octulosonate biosynthesis; CMP-3-deoxy-D-manno-octulosonate from 3-deoxy-D-manno-octulosonate and CTP: step 1/1. Its pathway is bacterial outer membrane biogenesis; lipopolysaccharide biosynthesis. In terms of biological role, activates KDO (a required 8-carbon sugar) for incorporation into bacterial lipopolysaccharide in Gram-negative bacteria. In Rickettsia rickettsii (strain Sheila Smith), this protein is 3-deoxy-manno-octulosonate cytidylyltransferase.